The chain runs to 397 residues: ATP-dependent RNA helicase RhlB (397 aa).

Residues 8–36 (TRFHDFNLAPELMHAIQDLGFPYCTPIQA) carry the Q motif motif. Residues 39–219 (LGFTLKGKDA…KQWTTDPSIV (181 aa)) enclose the Helicase ATP-binding domain. 52-59 (AQTGTGKT) contacts ATP. Residues 165 to 168 (DEAD) carry the DEAD box motif. In terms of domain architecture, Helicase C-terminal spans 242–392 (DKYKLLYNLV…TPPTHLLRAV (151 aa)).

It belongs to the DEAD box helicase family. RhlB subfamily. Component of the RNA degradosome, which is a multiprotein complex involved in RNA processing and mRNA degradation.

It localises to the cytoplasm. It carries out the reaction ATP + H2O = ADP + phosphate + H(+). DEAD-box RNA helicase involved in RNA degradation. Has RNA-dependent ATPase activity and unwinds double-stranded RNA. This Pseudomonas syringae pv. tomato (strain ATCC BAA-871 / DC3000) protein is ATP-dependent RNA helicase RhlB.